Consider the following 24-residue polypeptide: Protein YahV (24 aa).

The chain crosses the membrane as a helical span at residues Ile4–Cys24.

It localises to the cell inner membrane. The chain is Protein YahV from Escherichia coli (strain K12).